Reading from the N-terminus, the 279-residue chain is Tumor protein p63-regulated gene 1 protein (279 aa).

The segment at 1–49 is disordered; it reads MSTIGSFDGFQPVSLKQEEEDQPSENDHLSTKEGNSGKDPGSRRISRQQ. A hSac2 domain is found at 72–259; it reads VTRPGAIETA…ILIETYTGLM (188 aa).

It belongs to the TPRG1 family. As to expression, highly expressed in skin. Also detected at low levels in tongue and esophagus.

Its subcellular location is the cytoplasm. This Mus musculus (Mouse) protein is Tumor protein p63-regulated gene 1 protein.